The chain runs to 109 residues: UPF0060 membrane protein PCC8801_1733 (109 aa).

4 helical membrane-spanning segments follow: residues 7–27 (LLYF…VWLW), 36–56 (YALL…LQTA), 58–78 (FGRV…LWGW), and 87–107 (SYDW…MYAP).

The protein belongs to the UPF0060 family.

It localises to the cell inner membrane. This Rippkaea orientalis (strain PCC 8801 / RF-1) (Cyanothece sp. (strain PCC 8801)) protein is UPF0060 membrane protein PCC8801_1733.